The following is a 362-amino-acid chain: E3 ubiquitin-protein ligase TM129 (362 aa).

At 1 to 6 the chain is on the lumenal side; the sequence is MESPEV. A helical membrane pass occupies residues 7-27; it reads TFTLAYVVFSVCFVFTPNEFH. The Cytoplasmic portion of the chain corresponds to 28-56; the sequence is SAGITVQNLLSGWLGSEDVAFVHYHIRRS. The helical transmembrane segment at 57–77 threads the bilayer; the sequence is TATLLTHSLLPMGYFIGMCFA. Residues 78-94 lie on the Lumenal side of the membrane; the sequence is APEKELYNVYKAADGWK. A helical transmembrane segment spans residues 95-115; it reads VFVLITVLLPVTTSILAFYWS. The Cytoplasmic segment spans residues 116–362; the sequence is QKRWGNHPLA…FCIVDVCIVR (247 aa). An RING-type; degenerate zinc finger spans residues 285–350; sequence CIGCMQTNAN…SSHVPCPTCR (66 aa).

This sequence belongs to the TMEM129 family. As to quaternary structure, integral component of ER-resident dislocation complexes.

The protein localises to the endoplasmic reticulum membrane. It catalyses the reaction S-ubiquitinyl-[E2 ubiquitin-conjugating enzyme]-L-cysteine + [acceptor protein]-L-lysine = [E2 ubiquitin-conjugating enzyme]-L-cysteine + N(6)-ubiquitinyl-[acceptor protein]-L-lysine.. It functions in the pathway protein modification; protein ubiquitination. Functionally, E3 ubiquitin-protein ligase involved in ER-associated protein degradation, preferentially associates with the E2 enzyme UBE2J2. The protein is E3 ubiquitin-protein ligase TM129 (tmem129) of Xenopus tropicalis (Western clawed frog).